Reading from the N-terminus, the 140-residue chain is Arsenate-mycothiol transferase ArsC1 (140 aa).

Belongs to the low molecular weight phosphotyrosine protein phosphatase family.

The protein localises to the cytoplasm. It carries out the reaction mycothiol + arsenate = arseno-mycothiol + H2O. Involved in defense against toxic arsenate. Involved in the mycothiol/myoredoxin redox pathway which uses a mycothioltransferase mechanism; facilitates adduct formation between arsenate and mycothiol. This chain is Arsenate-mycothiol transferase ArsC1 (arsC1), found in Corynebacterium glutamicum (strain ATCC 13032 / K051).